The primary structure comprises 731 residues: Small conductance calcium-activated potassium channel protein 3 (731 aa).

Positions 1–11 (MDTSGHFHDSG) are enriched in basic and acidic residues. 2 disordered regions span residues 1–170 (MDTS…SNPF) and 239–258 (ATHN…FPKA). Positions 30 to 40 (QQQQQQQQQQQ) are enriched in low complexity. The span at 41 to 51 (QPPPPAPPAAP) shows a compositional bias: pro residues. Low complexity predominate over residues 52–95 (QQPLGPSLQPQPPQLQQQQQQQQQQQQQQPPHPLSQLAQLQSQP). The segment covering 112–132 (PSSNSTAILHPSSRQGSQLNL) has biased composition (polar residues). Residues 138 to 147 (GHSPSSTATS) show a composition bias toward low complexity. The residue at position 167 (Ser-167) is a Phosphoserine. Polar residues predominate over residues 239 to 256 (ATHNHQHAGTTASSTTFP). A helical transmembrane segment spans residues 288 to 308 (LIFGMFGIVVMVIETELSWGL). Residues 315 to 335 (FSLALKCLISLSTIILLGLII) traverse the membrane as a helical segment. Residues 366-386 (ISLEMLVCAIHPIPGEYKFFW) traverse the membrane as a helical segment. A helical membrane pass occupies residues 405–425 (IILSIPMFLRLYLIARVMLLH). Residues 454–474 (LMTICPGTVLLVFSISLWIIA) traverse the membrane as a helical segment. The segment at residues 494–514 (FLGAMWLISITFLSIGYGDMV) is an intramembrane region (pore-forming). Residues 523–543 (VCLLTGIMGAGCTALVVAVVA) form a helical membrane-spanning segment. The tract at residues 561–637 (DTQLTKRIKN…LVDLSKMQNV (77 aa)) is calmodulin-binding. Residues 642–669 (ITELNDRSEDLEKQIGSLESKLEHLTAS) adopt a coiled-coil conformation. Residues 709–731 (ISDSPIGVSSTSFPTPYTSSSSC) form a disordered region. Residues 717–731 (SSTSFPTPYTSSSSC) show a composition bias toward low complexity.

Belongs to the potassium channel KCNN family. KCa2.3/KCNN3 subfamily. Homodimer. Heteromultimer with KCNN2 or KCNN1; this modulates plasma membrane expression and consequently the small conductance calcium-activated potassium channel activity. The complex is composed of 4 channel subunits each of which binds to a calmodulin subunit which regulates the channel activity through calcium-binding. Interacts with CALM1. As to expression, widely distributed in human tissues and is present at 20-60% of KCNN3 in the brain.

The protein localises to the cell membrane. It localises to the cytoplasm. The protein resides in the myofibril. It is found in the sarcomere. Its subcellular location is the z line. The catalysed reaction is K(+)(in) = K(+)(out). With respect to regulation, inhibited by bee venom neurotoxin apamin. Its function is as follows. Small conductance calcium-activated potassium channel that mediates the voltage-independent transmembrane transfer of potassium across the cell membrane through a constitutive interaction with calmodulin which binds the intracellular calcium allowing its opening. The current is characterized by a voltage-independent activation, an intracellular calcium concentration increase-dependent activation and a single-channel conductance of 10 picosiemens. Also presents an inwardly rectifying current, thus reducing its already small outward conductance of potassium ions, which is particularly the case when the membrane potential displays positive values, above + 20 mV. Activation is followed by membrane hyperpolarization. Thought to regulate neuronal excitability by contributing to the slow component of synaptic afterhyperpolarization. In terms of biological role, does not function as a small conductance calcium-activated potassium channel. Selectively suppresses endogenous KCNN3 currents, in a dominant-negative fashion by decreasing the abundance of functional channels in the plasma membrane, possibly by selectively coassembling with and sequestering native KCNN3 protein in intracellular compartments. This dominant inhibitory effect extends to other members of the SK subfamily. The polypeptide is Small conductance calcium-activated potassium channel protein 3 (Homo sapiens (Human)).